A 711-amino-acid chain; its full sequence is Polyribonucleotide nucleotidyltransferase (711 aa).

Residues D486 and D492 each contribute to the Mg(2+) site. Positions 553–612 constitute a KH domain; that stretch reads PRIHTIKISTDKIKDVIGKGGSVIRALTEETGTTIEIEDDGTVKIAATDGEKAKYAIRRI. Positions 622–690 constitute an S1 motif domain; that stretch reads GRIYNSKVTR…RQGRVRLSIK (69 aa). A disordered region spans residues 689–711; sequence IKEATEQSQPAAAPEAPASEQAE. The segment covering 694-711 has biased composition (low complexity); sequence EQSQPAAAPEAPASEQAE.

This sequence belongs to the polyribonucleotide nucleotidyltransferase family. In terms of assembly, component of the RNA degradosome, which is a multiprotein complex involved in RNA processing and mRNA degradation. Mg(2+) serves as cofactor.

The protein localises to the cytoplasm. The catalysed reaction is RNA(n+1) + phosphate = RNA(n) + a ribonucleoside 5'-diphosphate. Functionally, involved in mRNA degradation. Catalyzes the phosphorolysis of single-stranded polyribonucleotides processively in the 3'- to 5'-direction. In Salmonella typhi, this protein is Polyribonucleotide nucleotidyltransferase.